Here is a 703-residue protein sequence, read N- to C-terminus: Phosphate acetyltransferase (703 aa).

Residues 377-703 (AFRYELIQKA…IQATQAREGA (327 aa)) form a phosphate acetyltransferase region.

This sequence in the N-terminal section; belongs to the CobB/CobQ family. It in the C-terminal section; belongs to the phosphate acetyltransferase and butyryltransferase family.

The protein resides in the cytoplasm. It carries out the reaction acetyl-CoA + phosphate = acetyl phosphate + CoA. It participates in metabolic intermediate biosynthesis; acetyl-CoA biosynthesis; acetyl-CoA from acetate: step 2/2. Involved in acetate metabolism. The polypeptide is Phosphate acetyltransferase (pta) (Deinococcus geothermalis (strain DSM 11300 / CIP 105573 / AG-3a)).